The chain runs to 398 residues: Acetate kinase (398 aa).

N7 contributes to the Mg(2+) binding site. ATP is bound at residue K14. R91 contributes to the substrate binding site. D148 serves as the catalytic Proton donor/acceptor. ATP is bound by residues 208 to 212, 283 to 285, and 331 to 335; these read HIGNG, DMR, and GVGEN. E385 serves as a coordination point for Mg(2+).

The protein belongs to the acetokinase family. In terms of assembly, homodimer. Mg(2+) serves as cofactor. Mn(2+) is required as a cofactor.

It is found in the cytoplasm. The catalysed reaction is acetate + ATP = acetyl phosphate + ADP. Its pathway is metabolic intermediate biosynthesis; acetyl-CoA biosynthesis; acetyl-CoA from acetate: step 1/2. Catalyzes the formation of acetyl phosphate from acetate and ATP. Can also catalyze the reverse reaction. In Porphyromonas gingivalis (strain ATCC BAA-308 / W83), this protein is Acetate kinase.